The following is a 501-amino-acid chain: Cytochrome P450 6j1 (501 aa).

Residue Cys444 coordinates heme.

This sequence belongs to the cytochrome P450 family. It depends on heme as a cofactor.

It localises to the endoplasmic reticulum membrane. The protein localises to the microsome membrane. In Blattella germanica (German cockroach), this protein is Cytochrome P450 6j1 (CYP6J1).